Here is a 121-residue protein sequence, read N- to C-terminus: Iron-sulfur cluster assembly protein CyaY (121 aa).

The protein belongs to the frataxin family.

Involved in iron-sulfur (Fe-S) cluster assembly. May act as a regulator of Fe-S biogenesis. In Buchnera aphidicola subsp. Schizaphis graminum (strain Sg), this protein is Iron-sulfur cluster assembly protein CyaY.